We begin with the raw amino-acid sequence, 936 residues long: Phosphoenolpyruvate carboxylase (936 aa).

Residues His-155 and Lys-595 contribute to the active site.

The protein belongs to the PEPCase type 1 family. Homotetramer. It depends on Mg(2+) as a cofactor. The cofactor is Mn(2+).

It carries out the reaction oxaloacetate + phosphate = phosphoenolpyruvate + hydrogencarbonate. Exhibits positive allosteric property with acetyl-CoA and fructose 1,6-bisphosphate, and a negative one with L-aspartate and L-malate. Its function is as follows. Forms oxaloacetate, a four-carbon dicarboxylic acid source for the tricarboxylic acid cycle. The polypeptide is Phosphoenolpyruvate carboxylase (ppc) (Rhodothermus marinus (Rhodothermus obamensis)).